A 495-amino-acid chain; its full sequence is Glutamyl-tRNA(Gln) amidotransferase subunit A (495 aa).

Residues Lys78 and Ser158 each act as charge relay system in the active site. The active-site Acyl-ester intermediate is the Ser182.

Belongs to the amidase family. GatA subfamily. In terms of assembly, heterotrimer of A, B and C subunits.

The catalysed reaction is L-glutamyl-tRNA(Gln) + L-glutamine + ATP + H2O = L-glutaminyl-tRNA(Gln) + L-glutamate + ADP + phosphate + H(+). Its function is as follows. Allows the formation of correctly charged Gln-tRNA(Gln) through the transamidation of misacylated Glu-tRNA(Gln) in organisms which lack glutaminyl-tRNA synthetase. The reaction takes place in the presence of glutamine and ATP through an activated gamma-phospho-Glu-tRNA(Gln). This chain is Glutamyl-tRNA(Gln) amidotransferase subunit A, found in Roseobacter denitrificans (strain ATCC 33942 / OCh 114) (Erythrobacter sp. (strain OCh 114)).